We begin with the raw amino-acid sequence, 465 residues long: MITIETELINSTIDALKELISRPPLTEKLLSRPPFKYILDICKAVSAATGFPSPESCNYDDITDREERTAFLTSIIGQITDQLGVPVDVQIKSILAGKDVPKTLRMLVMLAQAAKLFKVRSNSSQPPPQQAPRETVASPPQEDLEALAREKAEKERQRREQEQQERERKERERQEKEREEREKHELESRERAEAEQWKQKQQQQQQQQQSAISPQKSPPKVRFADDDKTRVEEHQPVIERPHFNRPPPSQHSRRMAVTATSEPSAPQPSAMRLVKVVREESSDESNQDLNQNAGQDGGFTMGLDAEWCDEMLPGEFPLDTGAPAPSSTHGELVANILDTAEAYNVALHGDGSKKPTGLSTQRDKKPIDSYSQPVQKLISHISAIIRKSVPYAKHTAFLDEHILTMRTELHTASEAVTKLLSTSLKQESSLKQANNACESKLHSLKEQIYSLRQAQLELLHSTLAL.

2 disordered regions span residues Val-119–Met-301 and Leu-347–Pro-366. A coiled-coil region spans residues Leu-144 to Gln-207. Residues Ala-146 to Lys-198 are compositionally biased toward basic and acidic residues. The span at Gln-199–Lys-220 shows a compositional bias: low complexity. Positions Arg-222 to His-242 are enriched in basic and acidic residues.

It belongs to the TRAF3IP1 family.

The protein resides in the cell projection. Its subcellular location is the cilium. The protein localises to the flagellum. It is found in the cytoplasm. It localises to the cytoskeleton. The protein resides in the flagellum axoneme. Its subcellular location is the flagellum basal body. Its function is as follows. Component of the intraflagellar transport complex B (IFT-B) involved in flagellar assembly. The sequence is that of Intraflagellar transport protein 54 from Giardia intestinalis (strain ATCC 50803 / WB clone C6) (Giardia lamblia).